The chain runs to 724 residues: Golgin subfamily A member 6-like protein 6 (724 aa).

5 disordered regions span residues 1–108, 314–342, 374–454, 517–548, and 561–724; these read MLMW…HQEA, QEEK…MRRQ, MHEQ…EMWR, QEEM…KMWR, and WRQE…MQEH. The span at 15 to 29 shows a compositional bias: basic residues; it reads LPTHPHLPTHPHLPT. The span at 39 to 60 shows a compositional bias: basic and acidic residues; sequence MSKETRQSKLAEAKEQLTDHHP. Polar residues-rich tracts occupy residues 61–71 and 79–91; these read QTNPSVGTAAS and NNGT…TSGG. Residues 94–108 show a composition bias toward basic and acidic residues; sequence SPEDEQKASHQHQEA. Residues 164 to 686 are a coiled coil; sequence ELEQALSAVA…EKMWEQEEKM (523 aa).

Belongs to the GOLGA6 family.

This chain is Golgin subfamily A member 6-like protein 6 (GOLGA6L6), found in Homo sapiens (Human).